The primary structure comprises 78 residues: Cytochrome c oxidase subunit 6b-3 (78 aa).

The 44-residue stretch at 22-65 folds into the CHCH domain; sequence TRHCFTRYIEFHRCTTAKGEDANECERFAKYYRALCPGEWVDKW. Positions 25–35 match the Cx9C motif motif; sequence CFTRYIEFHRC. Cystine bridges form between Cys-25/Cys-57 and Cys-35/Cys-46. The Cx10C motif motif lies at 46–57; the sequence is CERFAKYYRALC.

The protein belongs to the cytochrome c oxidase subunit 6B (TC 3.D.4.8) family. Expressed in the whole plant.

The protein localises to the mitochondrion. Its function is as follows. This protein is one of the nuclear-coded polypeptide chains of cytochrome c oxidase, the terminal oxidase in mitochondrial electron transport. This protein may be one of the heme-binding subunits of the oxidase. The sequence is that of Cytochrome c oxidase subunit 6b-3 (COX6B-3) from Arabidopsis thaliana (Mouse-ear cress).